Here is a 336-residue protein sequence, read N- to C-terminus: Lipoyl synthase (336 aa).

Cysteine 81, cysteine 86, cysteine 92, cysteine 107, cysteine 111, cysteine 114, and serine 323 together coordinate [4Fe-4S] cluster. The Radical SAM core domain occupies 93–312; that stretch reads FGHGTATFMI…EDYGYELGFS (220 aa).

It belongs to the radical SAM superfamily. Lipoyl synthase family. The cofactor is [4Fe-4S] cluster.

It is found in the cytoplasm. The enzyme catalyses [[Fe-S] cluster scaffold protein carrying a second [4Fe-4S](2+) cluster] + N(6)-octanoyl-L-lysyl-[protein] + 2 oxidized [2Fe-2S]-[ferredoxin] + 2 S-adenosyl-L-methionine + 4 H(+) = [[Fe-S] cluster scaffold protein] + N(6)-[(R)-dihydrolipoyl]-L-lysyl-[protein] + 4 Fe(3+) + 2 hydrogen sulfide + 2 5'-deoxyadenosine + 2 L-methionine + 2 reduced [2Fe-2S]-[ferredoxin]. It functions in the pathway protein modification; protein lipoylation via endogenous pathway; protein N(6)-(lipoyl)lysine from octanoyl-[acyl-carrier-protein]: step 2/2. Its function is as follows. Catalyzes the radical-mediated insertion of two sulfur atoms into the C-6 and C-8 positions of the octanoyl moiety bound to the lipoyl domains of lipoate-dependent enzymes, thereby converting the octanoylated domains into lipoylated derivatives. The protein is Lipoyl synthase of Stenotrophomonas maltophilia (strain R551-3).